The chain runs to 568 residues: 2-succinyl-5-enolpyruvyl-6-hydroxy-3-cyclohexene-1-carboxylate synthase (568 aa).

It belongs to the TPP enzyme family. MenD subfamily. As to quaternary structure, homodimer. Requires Mg(2+) as cofactor. The cofactor is Mn(2+). It depends on thiamine diphosphate as a cofactor.

The enzyme catalyses isochorismate + 2-oxoglutarate + H(+) = 5-enolpyruvoyl-6-hydroxy-2-succinyl-cyclohex-3-ene-1-carboxylate + CO2. It functions in the pathway quinol/quinone metabolism; 1,4-dihydroxy-2-naphthoate biosynthesis; 1,4-dihydroxy-2-naphthoate from chorismate: step 2/7. The protein operates within quinol/quinone metabolism; menaquinone biosynthesis. Functionally, catalyzes the thiamine diphosphate-dependent decarboxylation of 2-oxoglutarate and the subsequent addition of the resulting succinic semialdehyde-thiamine pyrophosphate anion to isochorismate to yield 2-succinyl-5-enolpyruvyl-6-hydroxy-3-cyclohexene-1-carboxylate (SEPHCHC). This is 2-succinyl-5-enolpyruvyl-6-hydroxy-3-cyclohexene-1-carboxylate synthase from Pasteurella multocida (strain Pm70).